The following is a 347-amino-acid chain: Ribosomal RNA small subunit methyltransferase C (347 aa).

Belongs to the methyltransferase superfamily. RsmC family. Monomer.

Its subcellular location is the cytoplasm. It catalyses the reaction guanosine(1207) in 16S rRNA + S-adenosyl-L-methionine = N(2)-methylguanosine(1207) in 16S rRNA + S-adenosyl-L-homocysteine + H(+). Functionally, specifically methylates the guanine in position 1207 of 16S rRNA in the 30S particle. The sequence is that of Ribosomal RNA small subunit methyltransferase C from Shewanella baltica (strain OS155 / ATCC BAA-1091).